Consider the following 418-residue polypeptide: MKSFVSVPQNSDFPIQNLPYGVFSTKADSSRHIGVAIGDQILNLAEIANLFDGPQLKAHQDVFKQSTLNAFMALPRPAWLEARARIQQLLSEDCAVLRDNAHLRSRALVAQSDATMHLPAQIGDYTDFYSSIHHATNVGIMFRGKENALMPNWKWLPVGYHGRASSIVVSGTDLKRPVGQTKAPDAEVPSFGPSKLMDFELEMAFFVGGPENELGTRVPIEKAEDRIFGVVLMNDWSARDIQAWEYVPLGPFLAKSFATTVSPWVVSIEALRPYFVENPVQDPVPPAYLHHDDPFTLDINLAVSIRPEGDAVDHIVCKTNFKHLYWTLKQQLAHHTVNGCNLRAGDLLGSGTVSGPEEGAYGSMLELSWRGAKEVPVGSEIRKFLKDGDEVNLSGVCEKNGVRIGFGECRGKVLPADI.

Residue aspartate 127 participates in Ca(2+) binding. The Proton acceptor role is filled by histidine 134. Ca(2+)-binding residues include glutamate 200, glutamate 202, and aspartate 235. Mg(2+) is bound by residues aspartate 235, lysine 255, and threonine 259.

The protein belongs to the FAH family. Requires Ca(2+) as cofactor. Mg(2+) is required as a cofactor. In terms of tissue distribution, highly expressed in the intestine and the hypodermis.

It carries out the reaction 4-fumarylacetoacetate + H2O = acetoacetate + fumarate + H(+). It participates in amino-acid degradation; L-phenylalanine degradation; acetoacetate and fumarate from L-phenylalanine: step 6/6. Its function is as follows. Fumarylacetoacetase involved in the tyrosine degradation pathway. This Caenorhabditis elegans protein is Fumarylacetoacetase.